The sequence spans 146 residues: Large ribosomal subunit protein uL15 (146 aa).

Residues 18 to 45 (VLGRGLGCGKGKTSGRGHKGQKARSGCA) form a disordered region. Over residues 30-39 (TSGRGHKGQK) the composition is skewed to basic residues.

Belongs to the universal ribosomal protein uL15 family. In terms of assembly, part of the 50S ribosomal subunit.

Binds to the 23S rRNA. The chain is Large ribosomal subunit protein uL15 from Anaplasma marginale (strain St. Maries).